Reading from the N-terminus, the 216-residue chain is Endoplasmic reticulum vesicle protein 25 (216 aa).

The N-terminal stretch at 1–25 (MGSSRLAMRSALGLFFLLFVQISLA) is a signal peptide. At 26–185 (LKFDIAAGKG…TNESTNERVK (160 aa)) the chain is on the lumenal side. Residues 36-126 (ERCIRNFVLK…HRSIELDVDI (91 aa)) enclose the GOLD domain. The helical transmembrane segment at 186 to 206 (WFAFGTMGMLVGLGVWQVIYL) threads the bilayer. Topologically, residues 207–216 (RAYFRSKHLI) are cytoplasmic.

It belongs to the EMP24/GP25L family.

The protein localises to the endoplasmic reticulum membrane. It is found in the golgi apparatus membrane. Its function is as follows. Constituent of COPII-coated endoplasmic reticulum-derived transport vesicles. Required for efficient transport of a subset of secretory proteins to the Golgi. Facilitates retrograde transport from the Golgi to the endoplasmic reticulum. The chain is Endoplasmic reticulum vesicle protein 25 (erv25) from Emericella nidulans (strain FGSC A4 / ATCC 38163 / CBS 112.46 / NRRL 194 / M139) (Aspergillus nidulans).